Here is a 357-residue protein sequence, read N- to C-terminus: DNA replication and repair protein RecF (357 aa).

31–38 (GQNGAGKT) contributes to the ATP binding site.

The protein belongs to the RecF family.

The protein resides in the cytoplasm. Functionally, the RecF protein is involved in DNA metabolism; it is required for DNA replication and normal SOS inducibility. RecF binds preferentially to single-stranded, linear DNA. It also seems to bind ATP. This is DNA replication and repair protein RecF from Coxiella burnetii (strain CbuK_Q154) (Coxiella burnetii (strain Q154)).